The primary structure comprises 585 residues: Probable long-chain-fatty-acid--AMP ligase FadD30 (585 aa).

This sequence belongs to the ATP-dependent AMP-binding enzyme family.

It functions in the pathway lipid metabolism; fatty acid biosynthesis. Functionally, catalyzes the activation of long-chain fatty acids as acyl-adenylates (acyl-AMP), which are then transferred to a multifunctional polyketide synthase (PKS) for further chain extension. The sequence is that of Probable long-chain-fatty-acid--AMP ligase FadD30 (fadD30) from Mycobacterium tuberculosis (strain CDC 1551 / Oshkosh).